The chain runs to 199 residues: Photosystem I reaction center subunit XI (199 aa).

The next 2 membrane-spanning stretches (helical) occupy residues 108–128 and 165–185; these read ITAGLLAAIGAVHIMTALLVL and FWLGGCGGAVFAWLLVGTLHL.

The protein belongs to the PsaL family.

It is found in the cellular thylakoid membrane. This chain is Photosystem I reaction center subunit XI, found in Prochlorococcus marinus (strain MIT 9515).